A 148-amino-acid chain; its full sequence is 3-dehydroquinate dehydratase (148 aa).

Y24 (proton acceptor) is an active-site residue. 3 residues coordinate substrate: N80, H86, and D93. H106 acts as the Proton donor in catalysis. Residues 107–108 (IS) and R117 contribute to the substrate site.

Belongs to the type-II 3-dehydroquinase family. Homododecamer.

It carries out the reaction 3-dehydroquinate = 3-dehydroshikimate + H2O. It participates in metabolic intermediate biosynthesis; chorismate biosynthesis; chorismate from D-erythrose 4-phosphate and phosphoenolpyruvate: step 3/7. Its function is as follows. Catalyzes a trans-dehydration via an enolate intermediate. The sequence is that of 3-dehydroquinate dehydratase from Acidovorax ebreus (strain TPSY) (Diaphorobacter sp. (strain TPSY)).